Here is a 190-residue protein sequence, read N- to C-terminus: MSQRTVTRRYAAALYEEANANGVLEAVDEDVRMLLESLDSNRPLVRVFESPVIPQDKKDSIVRELLGDRVEDLTVRFLRLLIRKDRETMTEAILDQYQTLRDEQRGIVDAEVTVARPLADETRTTLVGVLEEKTGKEIRLHLHEDADLIGGLVVRIGDRVFDASVRSQLGALHDRLREATLSENALDDGA.

This sequence belongs to the ATPase delta chain family. As to quaternary structure, F-type ATPases have 2 components, F(1) - the catalytic core - and F(0) - the membrane proton channel. F(1) has five subunits: alpha(3), beta(3), gamma(1), delta(1), epsilon(1). F(0) has three main subunits: a(1), b(2) and c(10-14). The alpha and beta chains form an alternating ring which encloses part of the gamma chain. F(1) is attached to F(0) by a central stalk formed by the gamma and epsilon chains, while a peripheral stalk is formed by the delta and b chains.

Its subcellular location is the cell inner membrane. F(1)F(0) ATP synthase produces ATP from ADP in the presence of a proton or sodium gradient. F-type ATPases consist of two structural domains, F(1) containing the extramembraneous catalytic core and F(0) containing the membrane proton channel, linked together by a central stalk and a peripheral stalk. During catalysis, ATP synthesis in the catalytic domain of F(1) is coupled via a rotary mechanism of the central stalk subunits to proton translocation. Its function is as follows. This protein is part of the stalk that links CF(0) to CF(1). It either transmits conformational changes from CF(0) to CF(1) or is implicated in proton conduction. This is ATP synthase subunit delta from Salinibacter ruber (strain DSM 13855 / M31).